A 233-amino-acid polypeptide reads, in one-letter code: Probable GTP-binding protein EngB (233 aa).

Residues 31–205 (TGVEIAFAGR…RRKLDTWFGP (175 aa)) form the EngB-type G domain. GTP is bound by residues 39–46 (GRSNAGKS), 66–70 (GRTQL), 84–87 (DLPG), 151–154 (TKAD), and 184–186 (FSS). The Mg(2+) site is built by Ser46 and Thr68.

This sequence belongs to the TRAFAC class TrmE-Era-EngA-EngB-Septin-like GTPase superfamily. EngB GTPase family. It depends on Mg(2+) as a cofactor.

In terms of biological role, necessary for normal cell division and for the maintenance of normal septation. The polypeptide is Probable GTP-binding protein EngB (Photobacterium profundum (strain SS9)).